The following is a 188-amino-acid chain: Protein GrpE 2 (188 aa).

Residues methionine 1–glutamate 29 show a composition bias toward basic and acidic residues. The segment at methionine 1–glutamine 33 is disordered.

This sequence belongs to the GrpE family. As to quaternary structure, homodimer.

The protein localises to the cytoplasm. Functionally, participates actively in the response to hyperosmotic and heat shock by preventing the aggregation of stress-denatured proteins, in association with DnaK and GrpE. It is the nucleotide exchange factor for DnaK and may function as a thermosensor. Unfolded proteins bind initially to DnaJ; upon interaction with the DnaJ-bound protein, DnaK hydrolyzes its bound ATP, resulting in the formation of a stable complex. GrpE releases ADP from DnaK; ATP binding to DnaK triggers the release of the substrate protein, thus completing the reaction cycle. Several rounds of ATP-dependent interactions between DnaJ, DnaK and GrpE are required for fully efficient folding. The sequence is that of Protein GrpE 2 from Buchnera aphidicola subsp. Schizaphis graminum (strain Sg).